We begin with the raw amino-acid sequence, 119 residues long: Protein YdaY (119 aa).

The polypeptide is Protein YdaY (ydaY) (Escherichia coli (strain K12)).